A 1040-amino-acid polypeptide reads, in one-letter code: Nucleotide-binding oligomerization domain-containing protein 2 (1040 aa).

CARD domains follow at residues 26–122 and 126–218; these read CEMC…LHGC and HSLH…EAAT. The ATG16L1-binding motif signature appears at 63 to 77; that stretch reads WEVLSWEDYEGFHLL. The ADP site is built by T239, Y252, T253, G302, S303, G304, K305, S306, and T307. A required for CARD9 binding region spans residues 241 to 274; that stretch reads DGAETLCLEDIYTENVLEVWADVGMAGPPQKSPA. One can recognise an NACHT domain in the interval 293-618; sequence DTVLVVGEAG…FFAAFYLALS (326 aa). 299-306 is a binding site for ATP; it reads GEAGSGKS. The S-palmitoyl cysteine moiety is linked to residue C395. H603 contacts ADP. LRR repeat units lie at residues 791–812, 816–839, 844–865, 872–884, 900–920, 928–949, 956–976, 984–1005, and 1012–1032; these read RPVALQLDYNSVGDIGVEQLLP, VCKALYLRDNNISDRGICKLIECA, QLQKLALFNNKLTDGCAHSMAK, NFLALRLGNNYIT, SLQFLGFWGNRVGDEGAQALA, SLRWLSLVGNNIGSVGAQALAL, MLEELCLEENHLQDEGVCSLA, SLKILKLSNNCITYLGAEALLQ, and TILEVWLRGNTFSLEEVDKLG. C1033 carries the S-palmitoyl cysteine lipid modification.

The protein belongs to the NOD1-NOD2 family. Homooligomer: homooligomerizes following muramyl dipeptide (MDP)-binding, promoting RIPK2 recruitment. Interacts (via CARD domain) with RIPK2 (via CARD domain). Following RIPK2 recruitment, RIPK2 homooligomerizes via its CARD domain and forms long filaments named RIPosomes. Interacts (via CARD domain) with ubiquitin; inhibiting interaction with RIPK2. Component of a signaling complex consisting of ARHGEF2, NOD2 and RIPK2. Interacts with ANKRD17 (via N-terminus). Interacts with HSPA1A; the interaction enhances NOD2 stability. Interacts (via both CARD domains) with HSP90; the interaction enhances NOD2 stability. Interacts (via CARD domain) with SOCS3; the interaction promotes NOD2 degradation. Interacts (via CARD domain) with ERBIN; the interaction inhibits activation of NOD2. Interacts with MAPKBP1; the interaction is enhanced in the presence of muramyl dipeptide (MDP) and inhibits NOD2 homooligomerization and activation. Interacts with INAVA; the interaction takes place upon Pattern recognition receptor (PRR) stimulation. Interacts (via NACHT domain) with CARD9. Interacts (via CARD domain) with CASP1; this interaction leads to IL1B processing. Also interacts with CASP4. Interacts with NLRP1; this interaction is enhanced in the presence of muramyl dipeptide (MDP) and leads to increased IL1B release. Interacts with NLRP12; this interaction promotes degradation of NOD2 through the ubiquitin-proteasome pathway. Interacts with ANKHD1, C10orf67, CHMP5, DOCK7, ENTR1, KRT15, LDOC1, PPP1R12C, PPP2R3B, TRIM41 and VIM. Interacts with MAVS; interaction takes place following single-stranded RNA (ssRNA)-binding. Interacts with ATG16L1. Interacts with IRGM; promoting IRGM 'Lys-63'-linked polyubiquitination, which is required for interactions with the core autophagy factors. In terms of processing, palmitoylated by ZDHHC5; palmitoylation is required for proper recruitment to the bacterial entry site and hence for proper signaling upon cognate peptidoglycan detection. Palmitoylation promotes localization to the cell membrane. Palmitoylation protects from SQSTM1/p62-dependent autophagic degradation. Post-translationally, polyubiquitinated by TRIM27, leading to proteasome-mediated degradation. Polyubiquitinated and degraded following muramyl dipeptide (MDP) stimulation, conferring MDP tolerance and preventing septic shock. Degraded via selective autophagy following interaction with IRGM. IRGM promotes NOD2-RIPK2 RIPosome recruitment to autophagosome membranes, promoting their SQSTM1/p62-dependent autophagic degradation. In terms of processing, O-glycosylated by OGT, O-GlcNAcylation increases protein stability. In terms of tissue distribution, expressed in monocytes, macrophages, dendritic cells, hepatocytes, preadipocytes, epithelial cells of oral cavity, lung and intestine, with higher expression in ileal Paneth cells and in intestinal stem cells. As to expression, expressed at higher level in leukocytes.

It is found in the cell membrane. The protein localises to the basolateral cell membrane. Its subcellular location is the cytoplasm. The protein resides in the mitochondrion. Its activity is regulated as follows. ADP-binding promotes an inactive closed conformation. Functionally, pattern recognition receptor (PRR) that detects bacterial peptidoglycan fragments and other danger signals and plays an important role in gastrointestinal immunity. Specifically activated by muramyl dipeptide (MDP), a fragment of bacterial peptidoglycan found in every bacterial peptidoglycan type. NOD2 specifically recognizes and binds 6-O-phospho-MDP, the phosphorylated form of MDP, which is generated by NAGK. 6-O-phospho-MDP-binding triggers oligomerization that facilitates the binding and subsequent activation of the proximal adapter receptor-interacting RIPK2. Following recruitment, RIPK2 undergoes 'Met-1'- (linear) and 'Lys-63'-linked polyubiquitination by E3 ubiquitin-protein ligases XIAP, BIRC2, BIRC3 and the LUBAC complex, becoming a scaffolding protein for downstream effectors, triggering activation of the NF-kappa-B and MAP kinases signaling. This in turn leads to the transcriptional activation of hundreds of genes involved in immune response. Its ability to detect bacterial MDP plays a central role in maintaining the equilibrium between intestinal microbiota and host immune responses to control inflammation. An imbalance in this relationship results in dysbiosis, whereby pathogenic bacteria prevail on commensals, causing damage in the intestinal epithelial barrier as well as allowing bacterial invasion and inflammation. Acts as a regulator of appetite by sensing MDP in a subset of brain neurons: microbiota-derived MDP reach the brain, where they bind and activate NOD2 in inhibitory hypothalamic neurons, decreasing neuronal activity, thereby regulating satiety and body temperature. NOD2-dependent MDP-sensing of bacterial cell walls in the intestinal epithelial compartment contributes to sustained postnatal growth upon undernutrition. Also plays a role in antiviral response by acting as a sensor of single-stranded RNA (ssRNA) from viruses: upon ssRNA-binding, interacts with MAVS, leading to activation of interferon regulatory factor-3/IRF3 and expression of type I interferon. Also acts as a regulator of autophagy in dendritic cells via its interaction with ATG16L1, possibly by recruiting ATG16L1 at the site of bacterial entry. NOD2 activation in the small intestine crypt also contributes to intestinal stem cells survival and function: acts by promoting mitophagy via its association with ATG16L1. In addition to its main role in innate immunity, also regulates the adaptive immune system by acting as regulator of helper T-cell and regulatory T-cells (Tregs). Besides recognizing pathogens, also involved in the endoplasmic reticulum stress response: acts by sensing and binding to the cytosolic metabolite sphingosine-1-phosphate generated in response to endoplasmic reticulum stress, initiating an inflammation process that leads to activation of the NF-kappa-B and MAP kinases signaling. May also be involved in NLRP1 activation following activation by MDP, leading to CASP1 activation and IL1B release in macrophages. Acts as a pattern recognition receptor (PRR); able to activate NF-kappa-B. Its function is as follows. Can activate NF-kappa-B in a muramyl dipeptide (MDP)-independent manner. The chain is Nucleotide-binding oligomerization domain-containing protein 2 from Homo sapiens (Human).